The sequence spans 253 residues: Large ribosomal subunit protein bL28m (253 aa).

Residues 1 to 55 (MPLHKYPPALWDVLKLKDGIYARLPEHYRRSLLEKHKPYPVHWKPHGLKYRLNPK) constitute a mitochondrion transit peptide.

It belongs to the bacterial ribosomal protein bL28 family. As to quaternary structure, component of the mitochondrial ribosome large subunit (39S) which comprises a 16S rRNA and about 50 distinct proteins.

It localises to the mitochondrion. The polypeptide is Large ribosomal subunit protein bL28m (mrpl28) (Xenopus laevis (African clawed frog)).